Reading from the N-terminus, the 472-residue chain is Alanine--anticapsin ligase (472 aa).

Glu109 is a binding site for Mg(2+). The ATP site is built by Lys138 and Lys178. An ATP-grasp domain is found at 142 to 355 (RAAFNRAGVK…MAQLLLDVLC (214 aa)). Leu182 serves as a coordination point for Mg(2+). ATP-binding positions include 184–185 (SS), 226–229 (EEFL), and Gln268. Substrate is bound by residues Glu273 and 309 to 311 (HTE). Mg(2+) is bound by residues Glu311 and Glu324. Substrate is bound at residue 328–331 (RFAG).

As to quaternary structure, monomer or homodimer. Requires Mg(2+) as cofactor.

The catalysed reaction is L-anticapsin + L-alanine + ATP = bacilysin + ADP + phosphate + H(+). It functions in the pathway antibiotic biosynthesis; bacilysin biosynthesis. Part of the bacABCDEFG operon responsible for the biosynthesis of bacilysin, an irreversible inactivator of the glutaminase domain of glucosamine synthetase. Catalyzes the formation of alpha-dipeptides from various L-amino acids in the presence of ATP. In vivo catalyzes the ligation of L-alanine and L-anticapsin (epoxycyclohexanonyl-Ala) to produce the final bacilysin antibiotic (L-Ala-L-4S-cyclohexenonyl-Ala dipeptide). This chain is Alanine--anticapsin ligase, found in Bacillus amyloliquefaciens (Bacillus velezensis).